We begin with the raw amino-acid sequence, 202 residues long: NAD(P)H-quinone oxidoreductase chain 6 (202 aa).

Transmembrane regions (helical) follow at residues 9–29 (VVSF…VVLA), 32–52 (IVYS…MYLL), 61–81 (AQVL…IMLV), 98–118 (VLTA…VLAT), and 144–164 (FLLP…GAII).

The protein belongs to the complex I subunit 6 family.

It is found in the membrane. The enzyme catalyses a plastoquinone + NADH + (n+1) H(+)(in) = a plastoquinol + NAD(+) + n H(+)(out). The catalysed reaction is a plastoquinone + NADPH + (n+1) H(+)(in) = a plastoquinol + NADP(+) + n H(+)(out). Its function is as follows. NDH-1 shuttles electrons from NAD(P)H, via FMN and iron-sulfur (Fe-S) centers, to quinones in the respiratory chain. The immediate electron acceptor for the enzyme in this species is believed to be plastoquinone. Couples the redox reaction to proton translocation (for every two electrons transferred, four hydrogen ions are translocated across the cytoplasmic membrane), and thus conserves the redox energy in a proton gradient. The chain is NAD(P)H-quinone oxidoreductase chain 6 (ndhG) from Nostoc sp. (strain PCC 7120 / SAG 25.82 / UTEX 2576).